The following is a 107-amino-acid chain: UPF0060 membrane protein ZMO1566 (107 aa).

The next 4 helical transmembrane spans lie at 4–24 (LLYI…WAWI), 29–49 (SPLW…LLTF), 55–75 (AGKA…LWSW), and 84–104 (HWDL…LWMP).

The protein belongs to the UPF0060 family.

It is found in the cell inner membrane. In Zymomonas mobilis subsp. mobilis (strain ATCC 31821 / ZM4 / CP4), this protein is UPF0060 membrane protein ZMO1566.